We begin with the raw amino-acid sequence, 325 residues long: Elongation factor P--(R)-beta-lysine ligase (325 aa).

A substrate-binding site is contributed by 76-78 (SPE). Residues 100–102 (RNE) and N109 contribute to the ATP site. Y118 provides a ligand contact to substrate. 244–245 (EL) is an ATP binding site. Substrate is bound at residue E251. G300 is an ATP binding site.

It belongs to the class-II aminoacyl-tRNA synthetase family. EpmA subfamily. As to quaternary structure, homodimer.

It catalyses the reaction D-beta-lysine + L-lysyl-[protein] + ATP = N(6)-((3R)-3,6-diaminohexanoyl)-L-lysyl-[protein] + AMP + diphosphate + H(+). With EpmB is involved in the beta-lysylation step of the post-translational modification of translation elongation factor P (EF-P) on 'Lys-34'. Catalyzes the ATP-dependent activation of (R)-beta-lysine produced by EpmB, forming a lysyl-adenylate, from which the beta-lysyl moiety is then transferred to the epsilon-amino group of EF-P 'Lys-34'. The sequence is that of Elongation factor P--(R)-beta-lysine ligase from Salmonella typhi.